A 93-amino-acid polypeptide reads, in one-letter code: Chromosomal protein MC1 (93 aa).

The tract at residues 1–43 is disordered; that stretch reads SNTRNFVLRDEEGNEHGVFTGKQPRQAALKAANRGDGTKSNPD.

Its function is as follows. Protects DNA against thermal denaturation and modulates transcription. This chain is Chromosomal protein MC1, found in Methanosarcina barkeri.